Reading from the N-terminus, the 100-residue chain is Apolipoprotein C-II (100 aa).

Residues 1 to 25 form the signal peptide; it reads MDARSLLLLWLLLPLLLLLGCEVQG. A lipid binding region spans residues 65 to 73; that stretch reads AVDETIRDI. Positions 77–100 are lipoprotein lipase cofactor; it reads GSAAISTYTGILTDQILTMLQGKQ.

It belongs to the apolipoprotein C2 family. In terms of processing, proapolipoprotein C-II is synthesized as a sialic acid containing glycoprotein which is subsequently desialylated prior to its proteolytic processing. Post-translationally, proapolipoprotein C-II, the major form found in plasma undergoes proteolytic cleavage of its N-terminal hexapeptide to generate apolipoprotein C-II, which occurs as the minor form in plasma. Liver.

The protein resides in the secreted. Functionally, component of chylomicrons, very low-density lipoproteins (VLDL), low-density lipoproteins (LDL), and high-density lipoproteins (HDL) in plasma. Plays an important role in lipoprotein metabolism as an activator of lipoprotein lipase. Both proapolipoprotein C-II and apolipoprotein C-II can activate lipoprotein lipase. The polypeptide is Apolipoprotein C-II (APOC2) (Cavia porcellus (Guinea pig)).